A 227-amino-acid polypeptide reads, in one-letter code: UPF0758 protein Pcar_0065 (227 aa).

The 123-residue stretch at 105-227 folds into the MPN domain; the sequence is RYTSPQAVFA…YVSLADRGVL (123 aa). Zn(2+)-binding residues include H176, H178, and D189. The JAMM motif motif lies at 176–189; it reads HNHPSGDPSPSRED.

It belongs to the UPF0758 family.

This chain is UPF0758 protein Pcar_0065, found in Syntrophotalea carbinolica (strain DSM 2380 / NBRC 103641 / GraBd1) (Pelobacter carbinolicus).